The primary structure comprises 213 residues: MPEENIFLFVPNLIGYARIVFAIISFYFMPCCPFTASSFYLLSGLLDAFDGHAARALNQGTRFGAMLDMLTDRCATMCLLVNLALLYPRATLLFQLSMSLDVASHWLHLHSSVVRGSESHKMIDLSGNPVLRIYYTSRPALFTLCAGNELFYCLLYLFNFSEGPLVGSVGLFRMGLWVTAPIALLKSVISVIHLITAARNMAALDAADRAKKK.

Residues 1 to 5 are Cytoplasmic-facing; the sequence is MPEEN. Residues 6–26 traverse the membrane as a helical segment; the sequence is IFLFVPNLIGYARIVFAIISF. A topological domain (lumenal) is located at residue Tyr-27. A helical transmembrane segment spans residues 28–48; that stretch reads FMPCCPFTASSFYLLSGLLDA. Residues Asp-47 and Asp-50 each coordinate Mg(2+). At 49–73 the chain is on the cytoplasmic side; sequence FDGHAARALNQGTRFGAMLDMLTDR. A CDP-1,2-diacyl-sn-glycerol contacts are provided by Gly-51, Arg-55, and Thr-61. The Mg(2+) site is built by Asp-68 and Asp-72. Asp-72 acts as the Proton acceptor in catalysis. A helical transmembrane segment spans residues 74-94; it reads CATMCLLVNLALLYPRATLLF. A topological domain (lumenal) is located at residue Gln-95. The chain crosses the membrane as a helical span at residues 96–116; the sequence is LSMSLDVASHWLHLHSSVVRG. Residues 117-139 lie on the Cytoplasmic side of the membrane; sequence SESHKMIDLSGNPVLRIYYTSRP. Residues 140–160 traverse the membrane as a helical segment; the sequence is ALFTLCAGNELFYCLLYLFNF. Residues 161 to 174 lie on the Lumenal side of the membrane; the sequence is SEGPLVGSVGLFRM. A helical membrane pass occupies residues 175-195; sequence GLWVTAPIALLKSVISVIHLI. Residues 196-213 lie on the Cytoplasmic side of the membrane; it reads TAARNMAALDAADRAKKK.

This sequence belongs to the CDP-alcohol phosphatidyltransferase class-I family. Mn(2+) is required as a cofactor. Requires Mg(2+) as cofactor.

The protein resides in the endoplasmic reticulum membrane. The protein localises to the cell membrane. The enzyme catalyses a CDP-1,2-diacyl-sn-glycerol + myo-inositol = a 1,2-diacyl-sn-glycero-3-phospho-(1D-myo-inositol) + CMP + H(+). In terms of biological role, catalyzes the biosynthesis of phosphatidylinositol (PtdIns) as well as PtdIns:inositol exchange reaction. May thus act to reduce an excessive cellular PtdIns content. The exchange activity is due to the reverse reaction of PtdIns synthase and is dependent on CMP, which is tightly bound to the enzyme. The polypeptide is CDP-diacylglycerol--inositol 3-phosphatidyltransferase (Mus musculus (Mouse)).